Consider the following 526-residue polypeptide: Peptide chain release factor 3 (526 aa).

A tr-type G domain is found at 9–277 (DKRRTFAIIS…GIVEWAPKPL (269 aa)). Residues 18-25 (SHPDAGKT), 86-90 (DTPGH), and 140-143 (NKLD) contribute to the GTP site.

The protein belongs to the TRAFAC class translation factor GTPase superfamily. Classic translation factor GTPase family. PrfC subfamily.

The protein localises to the cytoplasm. Its function is as follows. Increases the formation of ribosomal termination complexes and stimulates activities of RF-1 and RF-2. It binds guanine nucleotides and has strong preference for UGA stop codons. It may interact directly with the ribosome. The stimulation of RF-1 and RF-2 is significantly reduced by GTP and GDP, but not by GMP. This chain is Peptide chain release factor 3, found in Shewanella baltica (strain OS155 / ATCC BAA-1091).